Reading from the N-terminus, the 346-residue chain is Histidinol-phosphate aminotransferase (346 aa).

The residue at position 209 (Lys-209) is an N6-(pyridoxal phosphate)lysine.

It belongs to the class-II pyridoxal-phosphate-dependent aminotransferase family. Histidinol-phosphate aminotransferase subfamily. As to quaternary structure, homodimer. Pyridoxal 5'-phosphate serves as cofactor.

The catalysed reaction is L-histidinol phosphate + 2-oxoglutarate = 3-(imidazol-4-yl)-2-oxopropyl phosphate + L-glutamate. Its pathway is amino-acid biosynthesis; L-histidine biosynthesis; L-histidine from 5-phospho-alpha-D-ribose 1-diphosphate: step 7/9. This chain is Histidinol-phosphate aminotransferase, found in Vibrio campbellii (strain ATCC BAA-1116).